The primary structure comprises 548 residues: Chaperonin GroEL (548 aa).

ATP contacts are provided by residues 30–33 (TLGP), Lys-51, 87–91 (DGTTT), Gly-415, and Asp-495.

Belongs to the chaperonin (HSP60) family. Forms a cylinder of 14 subunits composed of two heptameric rings stacked back-to-back. Interacts with the co-chaperonin GroES.

The protein localises to the cytoplasm. It carries out the reaction ATP + H2O + a folded polypeptide = ADP + phosphate + an unfolded polypeptide.. Together with its co-chaperonin GroES, plays an essential role in assisting protein folding. The GroEL-GroES system forms a nano-cage that allows encapsulation of the non-native substrate proteins and provides a physical environment optimized to promote and accelerate protein folding. This Idiomarina loihiensis (strain ATCC BAA-735 / DSM 15497 / L2-TR) protein is Chaperonin GroEL.